We begin with the raw amino-acid sequence, 449 residues long: Agmatine hydroxycinnamoyltransferase 1 (449 aa).

Residues H153 and D392 each act as proton acceptor in the active site.

This sequence belongs to the plant acyltransferase family. In terms of tissue distribution, highly expressed in roots. Expressed at low levels in flowers.

Its function is as follows. Hydroxycinnamoyl transferase that catalyzes the transfer of an acyl from p-coumaryol-CoA to agmatine, to produce coumaroyl agmatine. Can use feruloyl-CoA, caffeoyl-CoA and sinapoyl-CoA as acyl donors. Seems to be able to transfer the acyl group from p-coumaroyl-CoA and feruloyl-CoA to the acyl acceptors putrescine and spermidine. The protein is Agmatine hydroxycinnamoyltransferase 1 of Oryza sativa subsp. japonica (Rice).